A 483-amino-acid chain; its full sequence is Regulatory protein ViaA (483 aa).

It belongs to the ViaA family. In terms of assembly, homodimer. Interacts with RavA.

Its subcellular location is the cytoplasm. In terms of biological role, component of the RavA-ViaA chaperone complex, which may act on the membrane to optimize the function of some of the respiratory chains. ViaA stimulates the ATPase activity of RavA. This is Regulatory protein ViaA from Escherichia coli O9:H4 (strain HS).